The primary structure comprises 31 residues: Photosystem I reaction center subunit XII (31 aa).

Residues 7–26 (QVYIALLTALIPAFFALKLG) form a helical membrane-spanning segment.

It belongs to the PsaM family.

It localises to the plastid. It is found in the chloroplast thylakoid membrane. This Euglena viridis (Cercaria viridis) protein is Photosystem I reaction center subunit XII.